The chain runs to 286 residues: ATP synthase gamma chain (286 aa).

It belongs to the ATPase gamma chain family. As to quaternary structure, F-type ATPases have 2 components, CF(1) - the catalytic core - and CF(0) - the membrane proton channel. CF(1) has five subunits: alpha(3), beta(3), gamma(1), delta(1), epsilon(1). CF(0) has three main subunits: a, b and c.

The protein localises to the cell inner membrane. Its function is as follows. Produces ATP from ADP in the presence of a proton gradient across the membrane. The gamma chain is believed to be important in regulating ATPase activity and the flow of protons through the CF(0) complex. This is ATP synthase gamma chain from Alteromonas mediterranea (strain DSM 17117 / CIP 110805 / LMG 28347 / Deep ecotype).